The primary structure comprises 555 residues: Dihydroxy-acid dehydratase (555 aa).

Asp78 lines the Mg(2+) pocket. Residue Cys119 participates in [2Fe-2S] cluster binding. The Mg(2+) site is built by Asp120 and Lys121. At Lys121 the chain carries N6-carboxylysine. Cys192 serves as a coordination point for [2Fe-2S] cluster. Residue Glu444 participates in Mg(2+) binding. Ser470 serves as the catalytic Proton acceptor.

This sequence belongs to the IlvD/Edd family. Homodimer. Requires [2Fe-2S] cluster as cofactor. The cofactor is Mg(2+).

The catalysed reaction is (2R)-2,3-dihydroxy-3-methylbutanoate = 3-methyl-2-oxobutanoate + H2O. It catalyses the reaction (2R,3R)-2,3-dihydroxy-3-methylpentanoate = (S)-3-methyl-2-oxopentanoate + H2O. It functions in the pathway amino-acid biosynthesis; L-isoleucine biosynthesis; L-isoleucine from 2-oxobutanoate: step 3/4. The protein operates within amino-acid biosynthesis; L-valine biosynthesis; L-valine from pyruvate: step 3/4. Functions in the biosynthesis of branched-chain amino acids. Catalyzes the dehydration of (2R,3R)-2,3-dihydroxy-3-methylpentanoate (2,3-dihydroxy-3-methylvalerate) into 2-oxo-3-methylpentanoate (2-oxo-3-methylvalerate) and of (2R)-2,3-dihydroxy-3-methylbutanoate (2,3-dihydroxyisovalerate) into 2-oxo-3-methylbutanoate (2-oxoisovalerate), the penultimate precursor to L-isoleucine and L-valine, respectively. This chain is Dihydroxy-acid dehydratase, found in Halalkalibacterium halodurans (strain ATCC BAA-125 / DSM 18197 / FERM 7344 / JCM 9153 / C-125) (Bacillus halodurans).